Here is a 122-residue protein sequence, read N- to C-terminus: Ribonuclease P protein subunit p14 (122 aa).

Belongs to the eukaryotic/archaeal RNase P protein component 2 family. As to quaternary structure, RNase P consists of a catalytic RNA moiety and about 10 protein subunits; POP1, POP4, POP5, POP7, RPP14, RPP21, RPP25, RPP30, RPP38 and RPP40. Within the RNase P complex, POP1, POP7 and RPP25 form the 'finger' subcomplex, POP5, RPP14, RPP40 and homodimeric RPP30 form the 'palm' subcomplex, and RPP21, POP4 and RPP38 form the 'wrist' subcomplex. All subunits of the RNase P complex interact with the catalytic RNA.

It localises to the nucleus. The protein localises to the nucleolus. Component of ribonuclease P, a ribonucleoprotein complex that generates mature tRNA molecules by cleaving their 5'-ends. The protein is Ribonuclease P protein subunit p14 (Rpp14) of Mus musculus (Mouse).